Consider the following 338-residue polypeptide: Fructose-1,6-bisphosphatase class 1 (338 aa).

Residues E91, D113, L115, and D116 each coordinate Mg(2+). Residues 116–119 (DGSS), N208, and K274 contribute to the substrate site. E280 is a binding site for Mg(2+).

This sequence belongs to the FBPase class 1 family. Homotetramer. The cofactor is Mg(2+).

The protein resides in the cytoplasm. The enzyme catalyses beta-D-fructose 1,6-bisphosphate + H2O = beta-D-fructose 6-phosphate + phosphate. It functions in the pathway carbohydrate biosynthesis; gluconeogenesis. The sequence is that of Fructose-1,6-bisphosphatase class 1 from Ralstonia pickettii (strain 12J).